We begin with the raw amino-acid sequence, 111 residues long: Cell division protein FtsB (111 aa).

Over 1-3 the chain is Cytoplasmic; that stretch reads MGK. The helical transmembrane segment at 4-21 threads the bilayer; the sequence is LTLLLLILLGWLQYSLWL. Residues 22–111 are Periplasmic-facing; the sequence is GKNGIHDYVR…TNTPSNNIQR (90 aa). The stretch at 33–63 forms a coiled coil; the sequence is KDDVVVQQGNNAKLKDRNEQLFAEIDDLNGG. The tract at residues 90 to 111 is disordered; the sequence is ESNHRNANTAPSTNTPSNNIQR. Positions 95 to 111 are enriched in low complexity; that stretch reads NANTAPSTNTPSNNIQR.

Belongs to the FtsB family. Part of a complex composed of FtsB, FtsL and FtsQ.

Its subcellular location is the cell inner membrane. In terms of biological role, essential cell division protein. May link together the upstream cell division proteins, which are predominantly cytoplasmic, with the downstream cell division proteins, which are predominantly periplasmic. In Pectobacterium carotovorum subsp. carotovorum (strain PC1), this protein is Cell division protein FtsB.